The chain runs to 333 residues: DNA-directed RNA polymerase subunit alpha (333 aa).

The alpha N-terminal domain (alpha-NTD) stretch occupies residues 1 to 233 (MVREKIRVST…DLFIPFLHAE (233 aa)). The alpha C-terminal domain (alpha-CTD) stretch occupies residues 269–333 (IALKYIFIDQ…DILEMEKNFA (65 aa)).

Belongs to the RNA polymerase alpha chain family. As to quaternary structure, in plastids the minimal PEP RNA polymerase catalytic core is composed of four subunits: alpha, beta, beta', and beta''. When a (nuclear-encoded) sigma factor is associated with the core the holoenzyme is formed, which can initiate transcription.

The protein localises to the plastid. Its subcellular location is the chloroplast. The catalysed reaction is RNA(n) + a ribonucleoside 5'-triphosphate = RNA(n+1) + diphosphate. Its function is as follows. DNA-dependent RNA polymerase catalyzes the transcription of DNA into RNA using the four ribonucleoside triphosphates as substrates. This Cucumis sativus (Cucumber) protein is DNA-directed RNA polymerase subunit alpha.